Reading from the N-terminus, the 169-residue chain is ATP synthase subunit b (169 aa).

Residues 13–33 traverse the membrane as a helical segment; the sequence is LFLFQLINFLIIVFILKKFLF.

This sequence belongs to the ATPase B chain family. As to quaternary structure, F-type ATPases have 2 components, F(1) - the catalytic core - and F(0) - the membrane proton channel. F(1) has five subunits: alpha(3), beta(3), gamma(1), delta(1), epsilon(1). F(0) has three main subunits: a(1), b(2) and c(10-14). The alpha and beta chains form an alternating ring which encloses part of the gamma chain. F(1) is attached to F(0) by a central stalk formed by the gamma and epsilon chains, while a peripheral stalk is formed by the delta and b chains.

Its subcellular location is the cell inner membrane. In terms of biological role, f(1)F(0) ATP synthase produces ATP from ADP in the presence of a proton or sodium gradient. F-type ATPases consist of two structural domains, F(1) containing the extramembraneous catalytic core and F(0) containing the membrane proton channel, linked together by a central stalk and a peripheral stalk. During catalysis, ATP synthesis in the catalytic domain of F(1) is coupled via a rotary mechanism of the central stalk subunits to proton translocation. Component of the F(0) channel, it forms part of the peripheral stalk, linking F(1) to F(0). The sequence is that of ATP synthase subunit b from Endomicrobium trichonymphae.